The following is a 513-amino-acid chain: ATP synthase subunit alpha (513 aa).

169–176 (GDRKTGKS) contacts ATP.

Belongs to the ATPase alpha/beta chains family. As to quaternary structure, F-type ATPases have 2 components, CF(1) - the catalytic core - and CF(0) - the membrane proton channel. CF(1) has five subunits: alpha(3), beta(3), gamma(1), delta(1), epsilon(1). CF(0) has three main subunits: a(1), b(2) and c(9-12). The alpha and beta chains form an alternating ring which encloses part of the gamma chain. CF(1) is attached to CF(0) by a central stalk formed by the gamma and epsilon chains, while a peripheral stalk is formed by the delta and b chains.

The protein localises to the cell membrane. The enzyme catalyses ATP + H2O + 4 H(+)(in) = ADP + phosphate + 5 H(+)(out). Functionally, produces ATP from ADP in the presence of a proton gradient across the membrane. The alpha chain is a regulatory subunit. This Levilactobacillus brevis (strain ATCC 367 / BCRC 12310 / CIP 105137 / JCM 1170 / LMG 11437 / NCIMB 947 / NCTC 947) (Lactobacillus brevis) protein is ATP synthase subunit alpha.